The primary structure comprises 21 residues: Hemocyanin subunit 4 (21 aa).

It belongs to the tyrosinase family. Hemocyanin subfamily. Hemolymph.

The protein localises to the secreted. Its subcellular location is the extracellular space. Hemocyanins are copper-containing oxygen carriers occurring freely dissolved in the hemolymph of many mollusks and arthropods. In Maja squinado (Mediterranean spider crab), this protein is Hemocyanin subunit 4.